We begin with the raw amino-acid sequence, 588 residues long: Cyclin-dependent kinase 8 (588 aa).

The region spanning 26-348 is the Protein kinase domain; it reads FENSKEIGRG…CEEAMNDIYF (323 aa). Residues 32 to 40 and lysine 60 each bind ATP; that span reads IGRGTYGLV. Aspartate 158 serves as the catalytic Proton acceptor. Disordered regions lie at residues 376–426, 510–529, and 546–588; these read MTVA…GAHP, PGPS…AVPG, and MRAP…QYHR. Over residues 382–426 the composition is skewed to low complexity; the sequence is QAQQQHQQQQVQMQQQPQMGQQQMMGQPQMVQPQMGQPPMGGAHP. Over residues 557–588 the composition is skewed to low complexity; that stretch reads MPGRGMAPPQMGQQQPGPNQQQQQQWQQQYHR.

This sequence belongs to the protein kinase superfamily. CMGC Ser/Thr protein kinase family. CDC2/CDKX subfamily. As to quaternary structure, component of the Mediator complex. The cofactor is Mg(2+).

It localises to the nucleus. It carries out the reaction L-seryl-[protein] + ATP = O-phospho-L-seryl-[protein] + ADP + H(+). The enzyme catalyses L-threonyl-[protein] + ATP = O-phospho-L-threonyl-[protein] + ADP + H(+). It catalyses the reaction [DNA-directed RNA polymerase] + ATP = phospho-[DNA-directed RNA polymerase] + ADP + H(+). Component of the Mediator complex, a coactivator involved in regulated gene transcription of nearly all RNA polymerase II-dependent genes. Mediator functions as a bridge to convey information from gene-specific regulatory proteins to the basal RNA polymerase II transcription machinery. Mediator is recruited to promoters by direct interactions with regulatory proteins and serves as a scaffold for the assembly of a functional pre-initiation complex with RNA polymerase II and the general transcription factors. Phosphorylates the CTD (C-terminal domain) of the large subunit of RNA polymerase II (RNAp II), which may inhibit the formation of a transcription initiation complex. In Caenorhabditis elegans, this protein is Cyclin-dependent kinase 8 (cdk-8).